Here is a 136-residue protein sequence, read N- to C-terminus: Transmembrane protein 203 (136 aa).

The interaction with STING1 stretch occupies residues 1 to 51; the sequence is MLFSLRELVQWLGFATFEIFVHLLALLVFSVLLALRVDGLTPGLSWWNVFV. Transmembrane regions (helical) follow at residues 14-34, 50-72, 81-101, and 112-132; these read FATF…VLLA, FVPF…VRLF, VLRL…EMLL, and LWFG…MIRA. The tract at residues 52–136 is required for lysosomal localization of the STING-TMEM203 complex; it reads PFFAADGLST…LLMIRACRVN (85 aa).

As to quaternary structure, homodimer. Interacts with ATP2A2 and ITPR3. Interacts with STIM1 and STING1 (via transmembrane domain).

The protein resides in the endoplasmic reticulum membrane. The protein localises to the endoplasmic reticulum-Golgi intermediate compartment. It localises to the lysosome membrane. Its function is as follows. Involved in the regulation of cellular calcium homeotasis. Required for spermatogenesis. Acts as a regulator of STING-mediated inflammatory signaling in macrophages. Forms a complex with STING, promoting the activity of TBK1 kinase and the transcription factor IRF3, leading to activation of type I interferon expression. The protein is Transmembrane protein 203 (Tmem203) of Mus musculus (Mouse).